Reading from the N-terminus, the 757-residue chain is 5-methyltetrahydropteroyltriglutamate--homocysteine methyltransferase (757 aa).

Residues Arg-17–Lys-20 and Lys-115 each bind 5-methyltetrahydropteroyltri-L-glutamate. L-homocysteine-binding positions include Ile-430–Ser-432 and Glu-483. Residues Ile-430–Ser-432 and Glu-483 contribute to the L-methionine site. 5-methyltetrahydropteroyltri-L-glutamate is bound by residues Arg-514–Cys-515 and Trp-560. Asp-598 is an L-homocysteine binding site. Asp-598 contacts L-methionine. Glu-604 is a binding site for 5-methyltetrahydropteroyltri-L-glutamate. Zn(2+) contacts are provided by His-640, Cys-642, and Glu-664. The active-site Proton donor is the His-693. Cys-725 is a binding site for Zn(2+).

This sequence belongs to the vitamin-B12 independent methionine synthase family. The cofactor is Zn(2+).

The enzyme catalyses 5-methyltetrahydropteroyltri-L-glutamate + L-homocysteine = tetrahydropteroyltri-L-glutamate + L-methionine. Its pathway is amino-acid biosynthesis; L-methionine biosynthesis via de novo pathway; L-methionine from L-homocysteine (MetE route): step 1/1. In terms of biological role, catalyzes the transfer of a methyl group from 5-methyltetrahydrofolate to homocysteine resulting in methionine formation. This chain is 5-methyltetrahydropteroyltriglutamate--homocysteine methyltransferase, found in Buchnera aphidicola subsp. Schizaphis graminum (strain Sg).